A 1099-amino-acid chain; its full sequence is SLIT-ROBO Rho GTPase-activating protein 3 (1099 aa).

An F-BAR domain is found at 19–314 (AQIKEIRTQL…AVDNLDSRSD (296 aa)). A disordered region spans residues 205–225 (HEDRPQRRSSVKKIEKMKEKR). Residues 352–392 (QTELLMRYHQLQSRLATLKIENEEVRKTLDATMQTLQDMLT) adopt a coiled-coil conformation. The disordered stretch occupies residues 471–493 (ERAECGTTRPPCLPPKPQKMRRP). Positions 506–694 (GSMEAFIKDS…TIIIHHEAIF (189 aa)) constitute a Rho-GAP domain. Residues 744-803 (VEQIEAIAKFDYMGRSPRELSFKKGASLLLYHRASEDWWEGRHNGVDGLIPHQYIVVQDM) form the SH3 domain. Residues 809–820 (DSLSQKADSEAS) are compositionally biased toward polar residues. Residues 809-847 (DSLSQKADSEASSGPLLDDKASSKNDLQSPTEHISDYGF) form a disordered region. Phosphoserine occurs at positions 817, 820, 821, 837, and 858. 2 disordered regions span residues 861 to 911 (AAIP…SPEK) and 926 to 950 (PDKK…SSLG). Over residues 926–936 (PDKKALSEGHS) the composition is skewed to basic and acidic residues. A compositionally biased stretch (polar residues) spans 937 to 947 (MRSTCGSTRHS). A coiled-coil region spans residues 952–987 (HKSLEAEALAEDIEKTMSTALHELRELERQNTVKQA). At S954 the chain carries Phosphoserine. The segment at 995–1099 (LEPLKNPPGP…NSSADKSGTM (105 aa)) is disordered. Composition is skewed to low complexity over residues 1026–1038 (RRSS…MMTT) and 1060–1074 (VRPV…SSSS). Residues 1089-1099 (PNSSADKSGTM) show a composition bias toward polar residues.

In terms of assembly, homodimer. Forms a heterooligomer with SRGAP1 and SRGAP2 through its F-BAR domain. Interacts with WASF1. Probably interacts with ROBO1. Interacts with FASLG. Highly expressed in adult and fetal brain. Expressed at low levels in kidney. Isoform 3 is expressed in the kidney but is absent in the brain.

Its function is as follows. GTPase-activating protein for RAC1 and perhaps Cdc42, but not for RhoA small GTPase. May attenuate RAC1 signaling in neurons. In Homo sapiens (Human), this protein is SLIT-ROBO Rho GTPase-activating protein 3 (SRGAP3).